A 248-amino-acid polypeptide reads, in one-letter code: Probable transcriptional regulatory protein RPB_4273 (248 aa).

Residues 1-22 form a disordered region; that stretch reads MAGHSQFKNIMHRKGKQDAQRS.

It belongs to the TACO1 family.

Its subcellular location is the cytoplasm. This is Probable transcriptional regulatory protein RPB_4273 from Rhodopseudomonas palustris (strain HaA2).